We begin with the raw amino-acid sequence, 377 residues long: uncharacterized protein (377 aa).

Disordered regions lie at residues tyrosine 10 to asparagine 79, lysine 91 to glutamate 141, glutamate 182 to threonine 257, glutamate 265 to glutamate 284, and leucine 289 to proline 326. Composition is skewed to low complexity over residues isoleucine 14–glutamine 24, asparagine 46–asparagine 79, and asparagine 93–asparagine 124. Basic and acidic residues-rich tracts occupy residues glutamate 182–glutamate 196 and glutamine 209–glutamate 218. Positions threonine 221 to threonine 257 are enriched in low complexity. 2 stretches are compositionally biased toward basic and acidic residues: residues glutamate 265–asparagine 274 and asparagine 292–lysine 303. A compositionally biased stretch (basic residues) spans lysine 311–lysine 320.

This is an uncharacterized protein from Dictyostelium discoideum (Social amoeba).